The following is a 753-amino-acid chain: Polyadenylate-binding protein, cytoplasmic and nuclear (753 aa).

The segment covering 1–43 (MSAEASTTPAAETPVNGTPETSTTPAAPAAEATAAETAAPSTS) has biased composition (low complexity). The disordered stretch occupies residues 1 to 49 (MSAEASTTPAAETPVNGTPETSTTPAAPAAEATAAETAAPSTSQPHSAS). RRM domains follow at residues 48-126 (ASLY…WSQR), 136-213 (GNVF…HHIS), 229-306 (TNVY…RAQK), and 332-460 (VNLY…LAQR). 3 disordered regions span residues 363-417 (VMRD…SDKK), 607-649 (RGPG…PAAG), and 727-753 (GTEGEAAGEAPKPKEAATEESTEENKS). The segment covering 376–417 (DSDKEKKEESKEEKPEAAEKTEEAAKESGDDQDKENKKSDKK) has biased composition (basic and acidic residues). Residues 607–619 (RGPGYGQGRGGVP) are compositionally biased toward gly residues. A compositionally biased stretch (low complexity) spans 633–649 (QNAQPAAGRGEEAPAAG). A PABC domain is found at 647–724 (AAGLTAQSLA…ALSVYDEYMK (78 aa)). The segment covering 737–753 (PKPKEAATEESTEENKS) has biased composition (basic and acidic residues).

This sequence belongs to the polyadenylate-binding protein type-1 family.

The protein localises to the cytoplasm. It localises to the nucleus. Its function is as follows. Binds the poly(A) tail of mRNA. Appears to be an important mediator of the multiple roles of the poly(A) tail in mRNA biogenesis, stability and translation. In the nucleus, involved in both mRNA cleavage and polyadenylation. Is also required for efficient mRNA export to the cytoplasm. Acts in concert with a poly(A)-specific nuclease (PAN) to affect poly(A) tail shortening, which may occur concomitantly with either nucleocytoplasmic mRNA transport or translational initiation. In the cytoplasm, stimulates translation initiation and regulates mRNA decay through translation termination-coupled poly(A) shortening, probably mediated by PAN. In Aspergillus terreus (strain NIH 2624 / FGSC A1156), this protein is Polyadenylate-binding protein, cytoplasmic and nuclear (pab1).